Reading from the N-terminus, the 136-residue chain is NADH-ubiquinone oxidoreductase chain 2 (136 aa).

The next 4 membrane-spanning stretches (helical) occupy residues 12–32 (YFLIQSVASVIFLASILNQSF), 34–54 (FLIPFALLIKIGAAPFHMWLV), 74–94 (IGPLLGLAMLSSVSHLSWLMV), and 99–119 (FLLMLVYYVTYLAILYFAVIL).

The protein belongs to the complex I subunit 2 family.

The protein resides in the mitochondrion inner membrane. The catalysed reaction is a ubiquinone + NADH + 5 H(+)(in) = a ubiquinol + NAD(+) + 4 H(+)(out). Its function is as follows. Core subunit of the mitochondrial membrane respiratory chain NADH dehydrogenase (Complex I) that is believed to belong to the minimal assembly required for catalysis. Complex I functions in the transfer of electrons from NADH to the respiratory chain. The immediate electron acceptor for the enzyme is believed to be ubiquinone. The polypeptide is NADH-ubiquinone oxidoreductase chain 2 (ND2) (Artemia salina (Brine shrimp)).